Reading from the N-terminus, the 256-residue chain is tRNA (guanine-N(1)-)-methyltransferase (256 aa).

Residues Gly-113 and 132–137 (VGDYVL) each bind S-adenosyl-L-methionine.

Belongs to the RNA methyltransferase TrmD family. In terms of assembly, homodimer.

It is found in the cytoplasm. It carries out the reaction guanosine(37) in tRNA + S-adenosyl-L-methionine = N(1)-methylguanosine(37) in tRNA + S-adenosyl-L-homocysteine + H(+). Specifically methylates guanosine-37 in various tRNAs. The sequence is that of tRNA (guanine-N(1)-)-methyltransferase from Coprothermobacter proteolyticus (strain ATCC 35245 / DSM 5265 / OCM 4 / BT).